The chain runs to 181 residues: Sodium/potassium-transporting ATPase subunit beta-1-interacting protein 3 (181 aa).

Transmembrane regions (helical) follow at residues 5 to 22, 35 to 55, 62 to 82, and 151 to 171; these read TGRC…LVAL, APIL…FGTI, IVAY…IICF, and AVQI…ISVI.

The protein belongs to the NKAIN family. As to quaternary structure, interacts with atp1b1 C-terminus.

The protein localises to the cell membrane. This Xenopus tropicalis (Western clawed frog) protein is Sodium/potassium-transporting ATPase subunit beta-1-interacting protein 3 (nkain3).